The chain runs to 486 residues: Regulatory protein ViaA (486 aa).

It belongs to the ViaA family. In terms of assembly, homodimer. Interacts with RavA.

Its subcellular location is the cytoplasm. Its function is as follows. Component of the RavA-ViaA chaperone complex, which may act on the membrane to optimize the function of some of the respiratory chains. ViaA stimulates the ATPase activity of RavA. The polypeptide is Regulatory protein ViaA (Erwinia tasmaniensis (strain DSM 17950 / CFBP 7177 / CIP 109463 / NCPPB 4357 / Et1/99)).